A 293-amino-acid polypeptide reads, in one-letter code: 33 kDa chaperonin (293 aa).

2 cysteine pairs are disulfide-bonded: cysteine 237-cysteine 239 and cysteine 271-cysteine 274.

Belongs to the HSP33 family. Under oxidizing conditions two disulfide bonds are formed involving the reactive cysteines. Under reducing conditions zinc is bound to the reactive cysteines and the protein is inactive.

It localises to the cytoplasm. Redox regulated molecular chaperone. Protects both thermally unfolding and oxidatively damaged proteins from irreversible aggregation. Plays an important role in the bacterial defense system toward oxidative stress. In Haemophilus influenzae (strain 86-028NP), this protein is 33 kDa chaperonin.